A 300-amino-acid chain; its full sequence is NAD kinase (300 aa).

The Proton acceptor role is filled by D75. Residues 75-76 (DG), 149-150 (ND), R177, D179, 190-195 (TAYALS), A214, and Q248 each bind NAD(+).

It belongs to the NAD kinase family. Requires a divalent metal cation as cofactor.

Its subcellular location is the cytoplasm. The catalysed reaction is NAD(+) + ATP = ADP + NADP(+) + H(+). Its function is as follows. Involved in the regulation of the intracellular balance of NAD and NADP, and is a key enzyme in the biosynthesis of NADP. Catalyzes specifically the phosphorylation on 2'-hydroxyl of the adenosine moiety of NAD to yield NADP. The protein is NAD kinase of Paraburkholderia phytofirmans (strain DSM 17436 / LMG 22146 / PsJN) (Burkholderia phytofirmans).